A 544-amino-acid chain; its full sequence is MTKWLLLVVCLGIACQDVTSAAVNHQRKSANNLAHSMKVIYEWKHIDFDFGSDERRDAAIKSGEFDHTKNYPFDVDRWRDKTFVTIERNNGVPSSLNVVTNKKGKGGPLLRPYPDWSFAKYEDCSGIVSAFKIAVDKFDRLWVLDSGLVNNNQPMCSPKLLTFDLKTSKLVKQVEIPHNIAVNATTGMGELVSLAVQAIDRTNTMVYIADEKGEGLIMYQNSDDSFHRLTSNTFDYDPRYTKLTVAGESFTVKNGIYGIALSPVTNNLYYSPLLSHGLYYVDTEQFSNPQYEENNVQYEGSQDILNTQSFGKVVSKNGVLFLGLVGNSGIACVNEHQVLQRESFDVVAQNEETLQMIVSMKIMENLPQSGRINDPEGNEYMLALSNRMQKIINNDFNFNDVNFRILGANVDDLMRNTRCGRYHNQNAGNQNADNQNADNQNANNQNADNQNANKQNGNRQNDNRQNDNKQNGNRQNDNKQNGNRQNDNKQNGNRQNGNKQNDNKQNGNRQNDNKRNGNRQNDNQNNQNDNNRNDNQVHHSSKLH.

Residues 1–20 form the signal peptide; sequence MTKWLLLVVCLGIACQDVTS. N183 is a glycosylation site (N-linked (GlcNAc...) asparagine). The interval 421 to 544 is disordered; that stretch reads RYHNQNAGNQ…NQVHHSSKLH (124 aa). 20 tandem repeats follow at residues 424-428, 429-433, 434-438, 439-443, 444-448, 449-453, 454-458, 459-463, 464-468, 469-473, 474-478, 479-483, 484-488, 489-493, 494-498, 499-503, 504-508, 509-513, 514-518, and 519-523. Composition is skewed to low complexity over residues 424-460, 468-510, and 518-530; these read NQNAGNQNADNQNADNQNANNQNADNQNANKQNGNRQ, NKQN…GNRQ, and NRQNDNQNNQNDN. Residues 424–523 are 23 X 5 AA tandem repeats of [NKR]-[RQ]-N-[AGD]-[DNG]; it reads NQNAGNQNAD…KRNGNRQNDN (100 aa). The 21; half-length repeat unit spans residues 524–525; the sequence is QN. A run of 2 repeats spans residues 526–530 and 531–535.

Belongs to the major royal jelly protein family. Homoligomer; in the absence of RNA, assembles into a higher-order oligomeric form, composed of around 20 monomer units. As to expression, found in and secreted from the hypopharyngeal glands of the worker honey bee (at protein level); expression peaks at 12 days post eclosion. Expressed in the brains of worker bees. Expressed in the brains of adult worker bees peaking at 12 days post eclosion (at protein level). Expressed in the spermatheca of adult queen bees (at protein level); Expression levels are higher in mated queens than in virgin queens. Expressed in queen bee ovaries and male drone testes. Expression in the head of forager worker bees is lower than in the heads of nurse worker bees.

Its subcellular location is the secreted. In terms of biological role, abundant protein component of royal jelly, a substance produced in the hypopharyngeal gland containing proteins, free amino acids, fatty acids, sugars and other nutrients, which is fed to developing larvae by worker nurse bees. Major royal jelly proteins (MRJPs) are high in essential amino acids and probably have a nutritional function in larval food. All larvae are fed some royal jelly (also known as worker jelly) early in their development but it forms the principal source of nutrition for larvae destined to become queen bees. Secreted RNA-binding protein required to concentrate, stabilize and enhance environmental RNA bioavailability in the honey bee royal jelly. Acts as a RNA-aggregating protein: binds 18 nucleotides and longer single- and double-stranded RNA (ssRNA and dsRNA, respectively) in a non-specific manner. RNA-binding drives super-order assembly of oligomers into extracellular ribonucleoprotein granules that concentrate, protect and enhance RNA uptake granules, facilitating RNA transfer among bees. Produced in the spermatheca of adult queen bees, along with other major royal jelly proteins, where it may act as a nutrient supply for sperm stored by mated queens, or be involved in energy metabolism. The protein is Major royal jelly protein 3 of Apis mellifera (Honeybee).